Here is an 886-residue protein sequence, read N- to C-terminus: KH domain-containing protein hrpk-2 (886 aa).

A compositionally biased stretch (basic and acidic residues) spans 359-368 (DNHFYNDKDS). Positions 359-433 (DNHFYNDKDS…SHRKESACVD (75 aa)) are disordered. Composition is skewed to basic residues over residues 369–388 (GKHH…KKHY) and 415–425 (HERKKRQRSSH). 2 consecutive KH domains span residues 698 to 761 (KETV…IEKI) and 775 to 839 (PGIF…AYLT).

This is KH domain-containing protein hrpk-2 from Caenorhabditis elegans.